The chain runs to 561 residues: Putative pectinesterase/pectinesterase inhibitor 24 (561 aa).

A helical transmembrane segment spans residues 26–46 (IAIIAVSLVILAGIVIGAVFG). Residues 64–211 (DSISVSVKAV…TELTSNALAI (148 aa)) are pectinesterase inhibitor 24. N-linked (GlcNAc...) asparagine glycosylation is found at N92, N130, N148, and N200. The segment at 255-548 (DIVVAKDGSG…TVKPFIDGGR (294 aa)) is pectinesterase 24. The substrate site is built by T330 and Q360. D383 serves as the catalytic Proton donor; for pectinesterase activity. C397 and C417 are oxidised to a cystine. Catalysis depends on D404, which acts as the Nucleophile; for pectinesterase activity. Residues R468 and W470 each coordinate substrate. N-linked (GlcNAc...) asparagine glycosylation occurs at N472.

This sequence in the N-terminal section; belongs to the PMEI family. The protein in the C-terminal section; belongs to the pectinesterase family.

It is found in the membrane. The catalysed reaction is [(1-&gt;4)-alpha-D-galacturonosyl methyl ester](n) + n H2O = [(1-&gt;4)-alpha-D-galacturonosyl](n) + n methanol + n H(+). Its pathway is glycan metabolism; pectin degradation; 2-dehydro-3-deoxy-D-gluconate from pectin: step 1/5. Its function is as follows. Acts in the modification of cell walls via demethylesterification of cell wall pectin. The chain is Putative pectinesterase/pectinesterase inhibitor 24 (PME24) from Arabidopsis thaliana (Mouse-ear cress).